We begin with the raw amino-acid sequence, 332 residues long: UDP-N-acetylenolpyruvoylglucosamine reductase (332 aa).

In terms of domain architecture, FAD-binding PCMH-type spans 15-184; the sequence is IDVSAACFLE…TYVSFRLSKR (170 aa). Residue arginine 160 is part of the active site. Catalysis depends on serine 232, which acts as the Proton donor. Glutamate 328 is an active-site residue.

This sequence belongs to the MurB family. It depends on FAD as a cofactor.

The protein localises to the cytoplasm. The catalysed reaction is UDP-N-acetyl-alpha-D-muramate + NADP(+) = UDP-N-acetyl-3-O-(1-carboxyvinyl)-alpha-D-glucosamine + NADPH + H(+). It participates in cell wall biogenesis; peptidoglycan biosynthesis. Functionally, cell wall formation. The protein is UDP-N-acetylenolpyruvoylglucosamine reductase of Bacteroides fragilis (strain ATCC 25285 / DSM 2151 / CCUG 4856 / JCM 11019 / LMG 10263 / NCTC 9343 / Onslow / VPI 2553 / EN-2).